Consider the following 888-residue polypeptide: Translation initiation factor IF-2 (888 aa).

Disordered regions lie at residues 96-122 (TTKQDESDAAGKRAAEDVSLRTAEAPE) and 158-302 (ELKE…SAPT). Basic and acidic residues-rich tracts occupy residues 98–114 (KQDESDAAGKRAAEDVS) and 158–167 (ELKEKQEKRR). Polar residues predominate over residues 181–206 (TQVQEPGSETAAVSGSVAATQPESTE). Residues 207–225 (TAAVTPSATITVTTQTTPA) are compositionally biased toward low complexity. Composition is skewed to basic and acidic residues over residues 226-243 (AKERAPQKPAVKPEEKGE) and 253-269 (EAWKDEPVKRRESKARG). The tr-type G domain maps to 390–559 (SRAPVVTVMG…LLQAEVLELK (170 aa)). The tract at residues 399–406 (GHVDHGKT) is G1. 399–406 (GHVDHGKT) is a GTP binding site. The G2 stretch occupies residues 424-428 (GITQH). Residues 445–448 (DTPG) form a G3 region. GTP contacts are provided by residues 445-449 (DTPGH) and 499-502 (NKMD). The tract at residues 499–502 (NKMD) is G4. A G5 region spans residues 535–537 (SAK).

This sequence belongs to the TRAFAC class translation factor GTPase superfamily. Classic translation factor GTPase family. IF-2 subfamily.

The protein resides in the cytoplasm. Functionally, one of the essential components for the initiation of protein synthesis. Protects formylmethionyl-tRNA from spontaneous hydrolysis and promotes its binding to the 30S ribosomal subunits. Also involved in the hydrolysis of GTP during the formation of the 70S ribosomal complex. The chain is Translation initiation factor IF-2 from Nitrosomonas eutropha (strain DSM 101675 / C91 / Nm57).